The sequence spans 526 residues: MAASGSATAGGHWFSALALGVTLLKCLLIPTYHSTDFEVHRNWLAITHSLPISQWYYEATSEWTLDYPPFFAWFEYALSHIAKYFDQEMLNIHNLNYYSSRTLLFQRFSVILTDALFVYAVHECCKCIDGKRTGKDLTEKPKFILSVLLLWNFGLLIVDHIHFQYNGFLSGLLLLSIARLFQKRHIEGALLFAVLLHLKHIYLYVAPAYGVYLLRSYCFTASKPDGSVRWSSFSVVRVTSLGLIVFLVSALSLGPFLALNQLPQVFSRLFPFKRGLCHAYWAPNFWALYNALDKVLSVIGLKLKLLDPSQIPRASMTSGLVQQFQHTVLPSVSPLATLICTLIAILPSVFCLWFKPQGPRGFLRCLVLCALSSFMFGWHVHEKAILLAILPMSLLSVEKAGDATVFLILATTGHYSLFPLLFTAPELPIKILLMLLFTVYSISSLKTLFRKEKPLFNWMETVYLLGLGPLEVCCEFLLPFTSWKLKYPFIPLLLTSVYCAVGITYAWTRLYASVLTGSLVSKTKKH.

Transmembrane regions (helical) follow at residues 9 to 29 (AGGHWFSALALGVTLLKCLLI), 108 to 128 (FSVILTDALFVYAVHECCKCI), 143 to 163 (FILSVLLLWNFGLLIVDHIHF), 188 to 208 (GALLFAVLLHLKHIYLYVAPA), 238 to 258 (VTSLGLIVFLVSALSLGPFLA), 334 to 354 (PLATLICTLIAILPSVFCLWF), 361 to 380 (GFLRCLVLCALSSFMFGWHV), 400 to 422 (AGDATVFLILATTGHYSLFPLLF), 427 to 449 (LPIKILLMLLFTVYSISSLKTLF), 461 to 481 (TVYLLGLGPLEVCCEFLLPFT), and 487 to 507 (YPFIPLLLTSVYCAVGITYAW).

It belongs to the ALG6/ALG8 glucosyltransferase family.

It localises to the endoplasmic reticulum membrane. The enzyme catalyses an alpha-D-Glc-(1-&gt;3)-alpha-D-Man-(1-&gt;2)-alpha-D-Man-(1-&gt;2)-alpha-D-Man-(1-&gt;3)-[alpha-D-Man-(1-&gt;2)-alpha-D-Man-(1-&gt;3)-[alpha-D-Man-(1-&gt;2)-alpha-D-Man-(1-&gt;6)]-alpha-D-Man-(1-&gt;6)]-beta-D-Man-(1-&gt;4)-beta-D-GlcNAc-(1-&gt;4)-alpha-D-GlcNAc-diphospho-di-trans,poly-cis-dolichol + a di-trans,poly-cis-dolichyl beta-D-glucosyl phosphate = an alpha-D-Glc-(1-&gt;3)-alpha-D-Glc-(1-&gt;3)-alpha-D-Man-(1-&gt;2)-alpha-D-Man-(1-&gt;2)-alpha-D-Man-(1-&gt;3)-[alpha-D-Man-(1-&gt;2)-alpha-D-Man-(1-&gt;3)-[alpha-D-Man-(1-&gt;2)-alpha-D-Man-(1-&gt;6)]-alpha-D-Man-(1-&gt;6)]-beta-D-Man-(1-&gt;4)-beta-D-GlcNAc-(1-&gt;4)-alpha-D-GlcNAc-diphospho-di-trans,poly-cis-dolichol + a di-trans,poly-cis-dolichyl phosphate + H(+). It participates in protein modification; protein glycosylation. Functionally, dolichyl pyrophosphate Glc1Man9GlcNAc2 alpha-1,3-glucosyltransferase that operates in the biosynthetic pathway of dolichol-linked oligosaccharides, the glycan precursors employed in protein asparagine (N)-glycosylation. The assembly of dolichol-linked oligosaccharides begins on the cytosolic side of the endoplasmic reticulum membrane and finishes in its lumen. The sequential addition of sugars to dolichol pyrophosphate produces dolichol-linked oligosaccharides containing fourteen sugars, including two GlcNAcs, nine mannoses and three glucoses. Once assembled, the oligosaccharide is transferred from the lipid to nascent proteins by oligosaccharyltransferases. In the lumen of the endoplasmic reticulum, adds the second glucose residue from dolichyl phosphate glucose (Dol-P-Glc) onto the lipid-linked oligosaccharide intermediate Glc(1)Man(9)GlcNAc(2)-PP-Dol to produce Glc(2)Man(9)GlcNAc(2)-PP-Dol. Glc(2)Man(9)GlcNAc(2)-PP-Dol is a substrate for ALG10, the following enzyme in the biosynthetic pathway. Required for PKD1/Polycystin-1 maturation and localization to the plasma membrane of the primary cilia. The chain is Dolichyl pyrophosphate Glc1Man9GlcNAc2 alpha-1,3-glucosyltransferase from Mus musculus (Mouse).